The primary structure comprises 729 residues: Catalase-peroxidase (729 aa).

A cross-link (tryptophyl-tyrosyl-methioninium (Trp-Tyr) (with M-243)) is located at residues 95-217 (WHSAGTYRIT…LAAVQMGLIY (123 aa)). H96 functions as the Proton acceptor in the catalytic mechanism. The tryptophyl-tyrosyl-methioninium (Tyr-Met) (with W-95) cross-link spans 217–243 (YVNPEGPNGKPDPIAAATDIRETFFRM). Residue H258 participates in heme b binding.

The protein belongs to the peroxidase family. Peroxidase/catalase subfamily. Homodimer or homotetramer. Requires heme b as cofactor. In terms of processing, formation of the three residue Trp-Tyr-Met cross-link is important for the catalase, but not the peroxidase activity of the enzyme.

It catalyses the reaction H2O2 + AH2 = A + 2 H2O. It carries out the reaction 2 H2O2 = O2 + 2 H2O. Its function is as follows. Bifunctional enzyme with both catalase and broad-spectrum peroxidase activity. In Nitrobacter hamburgensis (strain DSM 10229 / NCIMB 13809 / X14), this protein is Catalase-peroxidase.